Reading from the N-terminus, the 136-residue chain is MARTKRTAYKSTGGKVPRKQLVIEAAGKSAPSTSGMTKPHRYRPGTVALREIRPYQKSTHFLIRKLPFQRLVREIAQDFKTDLKFQSAAIRTLQEASEAYLVVFLESKQHSNLARMYSQNKSFPWLEGKRRQPQPM.

Asymmetric dimethylarginine; by PRMT6; alternate is present on Arg-3. Arg-3 bears the Citrulline; alternate mark. Thr-4 bears the Phosphothreonine; by HASPIN mark. An Allysine; alternate modification is found at Lys-5. Lys-5 bears the N6,N6,N6-trimethyllysine; alternate mark. N6,N6-dimethyllysine; alternate is present on Lys-5. Position 5 is an N6-(2-hydroxyisobutyryl)lysine; alternate (Lys-5). Lys-5 carries the N6-(beta-hydroxybutyryl)lysine; alternate modification. N6-acetyllysine; alternate is present on Lys-5. Position 5 is an N6-methyllysine; alternate (Lys-5). Thr-7 bears the Phosphothreonine; by PKC mark. Lys-10 bears the N6,N6,N6-trimethyllysine; alternate mark. Lys-10 is subject to N6,N6-dimethyllysine; alternate. N6-(2-hydroxyisobutyryl)lysine; alternate is present on Lys-10. Lys-10 carries the post-translational modification N6-acetyllysine; alternate. An N6-methyllysine; alternate modification is found at Lys-10. Ser-11 is modified (ADP-ribosylserine; alternate). Ser-11 is modified (phosphoserine; alternate; by AURKB, AURKC, RPS6KA3, RPS6KA4 and RPS6KA5). Thr-12 carries the post-translational modification Phosphothreonine; by PKC. Position 15 is an N6-(2-hydroxyisobutyryl)lysine; alternate (Lys-15). The residue at position 15 (Lys-15) is an N6-(beta-hydroxybutyryl)lysine; alternate. N6-acetyllysine; alternate is present on Lys-15. Lys-15 bears the N6-glutaryllysine; alternate mark. Residue Lys-15 is modified to N6-succinyllysine; alternate. Arg-18 bears the Citrulline; alternate mark. An Asymmetric dimethylarginine; by CARM1; alternate modification is found at Arg-18. Residues Lys-19 and Lys-28 each carry the N6-(2-hydroxyisobutyryl)lysine; alternate modification. Lys-19 carries the post-translational modification N6-(beta-hydroxybutyryl)lysine; alternate. N6-acetyllysine; alternate occurs at positions 19 and 28. An N6-methyllysine; alternate mark is found at Lys-19 and Lys-28. Residues Lys-19 and Lys-28 each carry the N6-glutaryllysine; alternate modification. The residue at position 19 (Lys-19) is an N6-butyryllysine; alternate. The residue at position 28 (Lys-28) is an N6,N6,N6-trimethyllysine; alternate. Lys-28 carries the post-translational modification N6,N6-dimethyllysine; alternate. Ser-29 carries the ADP-ribosylserine; alternate modification. At Ser-29 the chain carries Phosphoserine; alternate; by AURKB, AURKC and RPS6KA5. Phosphoserine is present on Ser-32. Lys-38 carries the post-translational modification N6-methyllysine. Residue Tyr-42 is modified to Phosphotyrosine. N6,N6,N6-trimethyllysine; alternate is present on Lys-57. Residue Lys-57 is modified to N6-(2-hydroxyisobutyryl)lysine; alternate. At Lys-57 the chain carries N6-(beta-hydroxybutyryl)lysine; alternate. Lys-57 carries the N6-acetyllysine; alternate modification. The residue at position 57 (Lys-57) is an N6-glutaryllysine; alternate. N6-succinyllysine; alternate is present on Lys-57. Residue Lys-57 is modified to N6-methyllysine; by EHMT2; alternate. At Ser-58 the chain carries Phosphoserine. Lys-65 and Lys-80 each carry N6-(2-hydroxyisobutyryl)lysine; alternate. Lys-65 and Lys-80 each carry N6-methyllysine; alternate. Lys-80 carries the N6,N6,N6-trimethyllysine; alternate modification. Lys-80 carries the post-translational modification N6,N6-dimethyllysine; alternate. Position 80 is an N6-acetyllysine; alternate (Lys-80). An N6-glutaryllysine; alternate modification is found at Lys-80. Residue Lys-80 is modified to N6-succinyllysine; alternate. The residue at position 81 (Thr-81) is a Phosphothreonine. Position 87 is a phosphoserine (Ser-87).

Belongs to the histone H3 family. As to quaternary structure, the nucleosome is a histone octamer containing two molecules each of H2A, H2B, H3 and H4 assembled in one H3-H4 heterotetramer and two H2A-H2B heterodimers. The octamer wraps approximately 147 bp of DNA. Acetylation is generally linked to gene activation. Acetylation on Lys-19 favors methylation at Arg-18. In terms of processing, citrullination at Arg-18 by PADI4 impairs methylation and represses transcription. Post-translationally, asymmetric dimethylation at Arg-18 (H3R17me2a) by CARM1 is linked to gene activation. Asymmetric dimethylation at Arg-3 (H3R2me2a) by PRMT6 is linked to gene repression and is mutually exclusive with H3 Lys-5 methylation (H3K4me2 and H3K4me3). H3R2me2a is present at the 3' of genes regardless of their transcription state and is enriched on inactive promoters, while it is absent on active promoters. Methylation at Lys-5 (H3K4me) and Lys-80 (H3K79me) are linked to gene activation. Methylation at Lys-5 (H3K4me) facilitates subsequent acetylation of H3 and H4. Methylation at Lys-80 (H3K79me) is associated with DNA double-strand break (DSB) responses and is a specific target for TP53BP1. Methylation at Lys-10 (H3K9me) and Lys-28 (H3K27me) are linked to gene repression. Methylation at Lys-10 (H3K9me) is a specific target for HP1 proteins (CBX1, CBX3 and CBX5) and prevents subsequent phosphorylation at Ser-11 (H3S10ph) and acetylation of H3 and H4. Methylation at Lys-5 (H3K4me) and Lys-80 (H3K79me) require preliminary monoubiquitination of H2B at 'Lys-120'. Methylation at Lys-10 (H3K9me) and Lys-28 (H3K27me) are enriched in inactive X chromosome chromatin. Monomethylation at Lys-57 (H3K56me1) by EHMT2/G9A in G1 phase promotes interaction with PCNA and is required for DNA replication. In terms of processing, phosphorylated at Thr-4 (H3T3ph) by HASPIN during prophase and dephosphorylated during anaphase. Phosphorylation at Ser-11 (H3S10ph) by AURKB is crucial for chromosome condensation and cell-cycle progression during mitosis and meiosis. In addition phosphorylation at Ser-11 (H3S10ph) by RPS6KA4 and RPS6KA5 is important during interphase because it enables the transcription of genes following external stimulation, like mitogens, stress, growth factors or UV irradiation and result in the activation of genes, such as c-fos and c-jun. Phosphorylation at Ser-11 (H3S10ph), which is linked to gene activation, prevents methylation at Lys-10 (H3K9me) but facilitates acetylation of H3 and H4. Phosphorylation at Ser-11 (H3S10ph) by AURKB mediates the dissociation of HP1 proteins (CBX1, CBX3 and CBX5) from heterochromatin. Phosphorylation at Ser-11 (H3S10ph) is also an essential regulatory mechanism for neoplastic cell transformation. Phosphorylated at Ser-29 (H3S28ph) by MAP3K20 isoform 1, RPS6KA5 or AURKB during mitosis or upon ultraviolet B irradiation. Phosphorylation at Thr-7 (H3T6ph) by PRKCB is a specific tag for epigenetic transcriptional activation that prevents demethylation of Lys-5 (H3K4me) by LSD1/KDM1A. At centromeres, specifically phosphorylated at Thr-12 (H3T11ph) from prophase to early anaphase, by DAPK3 and PKN1. Phosphorylation at Thr-12 (H3T11ph) by PKN1 or isoform M2 of PKM (PKM2) is a specific tag for epigenetic transcriptional activation that promotes demethylation of Lys-10 (H3K9me) by KDM4C/JMJD2C. Phosphorylation at Tyr-42 (H3Y41ph) by JAK2 promotes exclusion of CBX5 (HP1 alpha) from chromatin. Post-translationally, lysine deamination at Lys-5 (H3K4all) to form allysine is mediated by LOXL2. Allysine formation by LOXL2 only takes place on H3K4me3 and results in gene repression. Butyrylation of histones marks active promoters and competes with histone acetylation. It is present during late spermatogenesis. In terms of processing, succinylation at Lys-80 (H3K79succ) by KAT2A takes place with a maximum frequency around the transcription start sites of genes. It gives a specific tag for epigenetic transcription activation. Post-translationally, serine ADP-ribosylation constitutes the primary form of ADP-ribosylation of proteins in response to DNA damage. Serine ADP-ribosylation at Ser-11 (H3S10ADPr) is mutually exclusive with phosphorylation at Ser-11 (H3S10ph) and impairs acetylation at Lys-10 (H3K9ac).

The protein localises to the nucleus. The protein resides in the chromosome. Functionally, core component of nucleosome. Nucleosomes wrap and compact DNA into chromatin, limiting DNA accessibility to the cellular machineries which require DNA as a template. Histones thereby play a central role in transcription regulation, DNA repair, DNA replication and chromosomal stability. DNA accessibility is regulated via a complex set of post-translational modifications of histones, also called histone code, and nucleosome remodeling. The protein is Histone H3.3C-like of Bos taurus (Bovine).